Consider the following 558-residue polypeptide: Formate--tetrahydrofolate ligase (558 aa).

65 to 72 (TPAGEGKT) provides a ligand contact to ATP.

The protein belongs to the formate--tetrahydrofolate ligase family.

The catalysed reaction is (6S)-5,6,7,8-tetrahydrofolate + formate + ATP = (6R)-10-formyltetrahydrofolate + ADP + phosphate. Its pathway is one-carbon metabolism; tetrahydrofolate interconversion. The chain is Formate--tetrahydrofolate ligase from Methylobacterium sp. (strain 4-46).